A 172-amino-acid chain; its full sequence is GTP-dependent dephospho-CoA kinase (172 aa).

The GTP site is built by D49, V50, V51, D68, K70, and E120.

Belongs to the GTP-dependent DPCK family.

It catalyses the reaction 3'-dephospho-CoA + GTP = GDP + CoA + H(+). It functions in the pathway cofactor biosynthesis; coenzyme A biosynthesis. Its function is as follows. Catalyzes the GTP-dependent phosphorylation of the 3'-hydroxyl group of dephosphocoenzyme A to form coenzyme A (CoA). The protein is GTP-dependent dephospho-CoA kinase of Pyrobaculum arsenaticum (strain DSM 13514 / JCM 11321 / PZ6).